Reading from the N-terminus, the 102-residue chain is Aspartyl/glutamyl-tRNA(Asn/Gln) amidotransferase subunit C (102 aa).

It belongs to the GatC family. Heterotrimer of A, B and C subunits.

The enzyme catalyses L-glutamyl-tRNA(Gln) + L-glutamine + ATP + H2O = L-glutaminyl-tRNA(Gln) + L-glutamate + ADP + phosphate + H(+). It carries out the reaction L-aspartyl-tRNA(Asn) + L-glutamine + ATP + H2O = L-asparaginyl-tRNA(Asn) + L-glutamate + ADP + phosphate + 2 H(+). Allows the formation of correctly charged Asn-tRNA(Asn) or Gln-tRNA(Gln) through the transamidation of misacylated Asp-tRNA(Asn) or Glu-tRNA(Gln) in organisms which lack either or both of asparaginyl-tRNA or glutaminyl-tRNA synthetases. The reaction takes place in the presence of glutamine and ATP through an activated phospho-Asp-tRNA(Asn) or phospho-Glu-tRNA(Gln). This chain is Aspartyl/glutamyl-tRNA(Asn/Gln) amidotransferase subunit C, found in Mycobacteroides abscessus (strain ATCC 19977 / DSM 44196 / CCUG 20993 / CIP 104536 / JCM 13569 / NCTC 13031 / TMC 1543 / L948) (Mycobacterium abscessus).